A 453-amino-acid polypeptide reads, in one-letter code: Tol-Pal system protein TolB (453 aa).

The first 39 residues, 1 to 39 (MSFIPNTEAEALSALFSRRSVLGATAAGGLLATPLAAFA), serve as a signal peptide directing secretion.

The protein belongs to the TolB family. In terms of assembly, the Tol-Pal system is composed of five core proteins: the inner membrane proteins TolA, TolQ and TolR, the periplasmic protein TolB and the outer membrane protein Pal. They form a network linking the inner and outer membranes and the peptidoglycan layer.

The protein localises to the periplasm. Functionally, part of the Tol-Pal system, which plays a role in outer membrane invagination during cell division and is important for maintaining outer membrane integrity. The chain is Tol-Pal system protein TolB from Gluconobacter oxydans (strain 621H) (Gluconobacter suboxydans).